We begin with the raw amino-acid sequence, 514 residues long: MEEIQRDLQLERSRQQDFLYPLIFQEYIYAFAHDRSLSRSFLSENPDSENQVYENKSSLLIVKRLITRMHKQNHFLISTNDSKKNLFLGRNKDLDSLILLEGFAFIVEIPYSLRLISSLEGKRKKIEKSQTLRSIHSIFPFLEDNFSHLNFVLDILIPYPVHAEILVQTLRYWVKDAPSLHFLRXXLNDYWSLSTPKKAGLKRNQRFFLFLYNSHVCEYESIFVFLRNQSSHLQSLSFGVLLERIYFYGKIECLGSVFLKVTDCQANLWLVKEPCMHYVRYQRKCILSSKGTSLFMNKWKCYLATFWQWHFSLWFHPRRISTNPLYNHLLEFVGYLSSARMHPAMVRSQILENSFLINNAIKKVDALIPIMPMVTSLAKAQFCNLLGHPTSKPVWADLSDSNIINRFGHICRNISHYYSGSSKKKSLYRIKYILRLSCARTLARKHKSTVRTFLKTAGSGFLEEFLMSEEDLLCWTFPKASSALWGVYKSRIWHLDIIWINDLANHKKNLRPWK.

Belongs to the intron maturase 2 family. MatK subfamily.

Its subcellular location is the plastid. The protein localises to the chloroplast. In terms of biological role, usually encoded in the trnK tRNA gene intron. Probably assists in splicing its own and other chloroplast group II introns. This Plantago argentea (Silver plantain) protein is Maturase K.